The sequence spans 88 residues: Small ribosomal subunit protein uS17 (88 aa).

This sequence belongs to the universal ribosomal protein uS17 family. In terms of assembly, part of the 30S ribosomal subunit.

Its function is as follows. One of the primary rRNA binding proteins, it binds specifically to the 5'-end of 16S ribosomal RNA. The protein is Small ribosomal subunit protein uS17 of Lawsonia intracellularis (strain PHE/MN1-00).